We begin with the raw amino-acid sequence, 251 residues long: Hydroxyacylglutathione hydrolase (251 aa).

Positions 58, 60, 62, 63, 116, 135, and 173 each coordinate Zn(2+).

Belongs to the metallo-beta-lactamase superfamily. Glyoxalase II family. As to quaternary structure, monomer. Zn(2+) serves as cofactor.

It carries out the reaction an S-(2-hydroxyacyl)glutathione + H2O = a 2-hydroxy carboxylate + glutathione + H(+). Its pathway is secondary metabolite metabolism; methylglyoxal degradation; (R)-lactate from methylglyoxal: step 2/2. Its function is as follows. Thiolesterase that catalyzes the hydrolysis of S-D-lactoyl-glutathione to form glutathione and D-lactic acid. The chain is Hydroxyacylglutathione hydrolase from Bdellovibrio bacteriovorus (strain ATCC 15356 / DSM 50701 / NCIMB 9529 / HD100).